The following is a 239-amino-acid chain: Biosynthetic peptidoglycan transglycosylase (239 aa).

A helical membrane pass occupies residues 29-49 (GMFGLGALMLVWIVAYAVVPV).

This sequence belongs to the glycosyltransferase 51 family.

Its subcellular location is the cell inner membrane. The catalysed reaction is [GlcNAc-(1-&gt;4)-Mur2Ac(oyl-L-Ala-gamma-D-Glu-L-Lys-D-Ala-D-Ala)](n)-di-trans,octa-cis-undecaprenyl diphosphate + beta-D-GlcNAc-(1-&gt;4)-Mur2Ac(oyl-L-Ala-gamma-D-Glu-L-Lys-D-Ala-D-Ala)-di-trans,octa-cis-undecaprenyl diphosphate = [GlcNAc-(1-&gt;4)-Mur2Ac(oyl-L-Ala-gamma-D-Glu-L-Lys-D-Ala-D-Ala)](n+1)-di-trans,octa-cis-undecaprenyl diphosphate + di-trans,octa-cis-undecaprenyl diphosphate + H(+). It participates in cell wall biogenesis; peptidoglycan biosynthesis. Its function is as follows. Peptidoglycan polymerase that catalyzes glycan chain elongation from lipid-linked precursors. This chain is Biosynthetic peptidoglycan transglycosylase, found in Jannaschia sp. (strain CCS1).